The following is a 496-amino-acid chain: Glycylpeptide N-tetradecanoyltransferase 1 (496 aa).

The disordered stretch occupies residues 1–82 (MADESETAVK…SAQDQPVKMN (82 aa)). A phosphoserine mark is found at serine 31 and serine 47. A compositionally biased stretch (basic residues) spans 55-66 (KKKKKKQKKKKE). Serine 83 carries the post-translational modification Phosphoserine. 11 residues coordinate tetradecanoyl-CoA: glutamine 118, phenylalanine 119, tryptophan 120, phenylalanine 247, leucine 248, cysteine 249, valine 250, serine 256, arginine 258, valine 259, and alanine 260.

Belongs to the NMT family.

It localises to the cytoplasm. It is found in the cytosol. The protein localises to the membrane. The catalysed reaction is N-terminal glycyl-[protein] + tetradecanoyl-CoA = N-tetradecanoylglycyl-[protein] + CoA + H(+). It carries out the reaction N-terminal glycyl-L-lysyl-[protein] + tetradecanoyl-CoA = N-terminal glycyl-(N(6)-tetradecanoyl)-L-lysyl-[protein] + CoA + H(+). Its function is as follows. Adds a myristoyl group to the N-terminal glycine residue of certain cellular and viral proteins. Also able to mediate N-terminal lysine myristoylation of proteins: catalyzes myristoylation of ARF6 on both 'Gly-2' and 'Lys-3'. Lysine myristoylation is required to maintain ARF6 on membranes during the GTPase cycle. The polypeptide is Glycylpeptide N-tetradecanoyltransferase 1 (NMT1) (Pongo abelii (Sumatran orangutan)).